Here is a 299-residue protein sequence, read N- to C-terminus: Taste receptor type 2 member 1 (299 aa).

The Extracellular segment spans residues 1–9 (MLESHLIIH). The chain crosses the membrane as a helical span at residues 10–30 (FLLAVIQFLLGTFTNGIIVVV). Residues 31 to 55 (NGIDLIKHRKMAPLDLLLSCLAVSR) are Cytoplasmic-facing. The chain crosses the membrane as a helical span at residues 56-76 (IFLQLFIFYVNVIVIFFIEFI). Topologically, residues 77 to 81 (MCSEN) are extracellular. A helical transmembrane segment spans residues 82-102 (CAILLFINELELWLATWLGVF). At 103-124 (YCAKVASVPHPLFIWLKMKISK) the chain is on the cytoplasmic side. A helical transmembrane segment spans residues 125 to 145 (LVPWMILGSLLYVSMTCVFHS). Over 146 to 178 (KYAGFMVPYFLRNFFSQNATIQKEDTPAIQIFS) the chain is Extracellular. An N-linked (GlcNAc...) asparagine glycan is attached at Asn-163. A helical transmembrane segment spans residues 179–199 (FVAEFLVPLLIFLVAVLLLIF). The Cytoplasmic portion of the chain corresponds to 200-222 (SLGRHTRQMRNTVAGSRVPGRGA). The helical transmembrane segment at 223–243 (PISALLSILSFVILYFSHCMI) threads the bilayer. Residues 244–257 (KVFLSSLKFHVRSF) are Extracellular-facing. The chain crosses the membrane as a helical span at residues 258–278 (ILPFFILVIGIYPSGHSLILI). Residues 279 to 299 (LGNXKLKQNAKKFLLHSKCCQ) are Cytoplasmic-facing.

Belongs to the G-protein coupled receptor T2R family.

Its subcellular location is the membrane. Its function is as follows. Receptor that may play a role in the perception of bitterness and is gustducin-linked. May play a role in sensing the chemical composition of the gastrointestinal content. The activity of this receptor may stimulate alpha gustducin, mediate PLC-beta-2 activation and lead to the gating of TRPM5. This Pongo pygmaeus (Bornean orangutan) protein is Taste receptor type 2 member 1 (TAS2R1).